Reading from the N-terminus, the 375-residue chain is UDP-N-acetylglucosamine--N-acetylmuramyl-(pentapeptide) pyrophosphoryl-undecaprenol N-acetylglucosamine transferase (375 aa).

UDP-N-acetyl-alpha-D-glucosamine contacts are provided by residues threonine 15 to glycine 17, asparagine 126, arginine 169, serine 197, and glutamine 298.

The protein belongs to the glycosyltransferase 28 family. MurG subfamily.

Its subcellular location is the cell inner membrane. The catalysed reaction is di-trans,octa-cis-undecaprenyl diphospho-N-acetyl-alpha-D-muramoyl-L-alanyl-D-glutamyl-meso-2,6-diaminopimeloyl-D-alanyl-D-alanine + UDP-N-acetyl-alpha-D-glucosamine = di-trans,octa-cis-undecaprenyl diphospho-[N-acetyl-alpha-D-glucosaminyl-(1-&gt;4)]-N-acetyl-alpha-D-muramoyl-L-alanyl-D-glutamyl-meso-2,6-diaminopimeloyl-D-alanyl-D-alanine + UDP + H(+). It functions in the pathway cell wall biogenesis; peptidoglycan biosynthesis. Cell wall formation. Catalyzes the transfer of a GlcNAc subunit on undecaprenyl-pyrophosphoryl-MurNAc-pentapeptide (lipid intermediate I) to form undecaprenyl-pyrophosphoryl-MurNAc-(pentapeptide)GlcNAc (lipid intermediate II). This Rhodopseudomonas palustris (strain BisB18) protein is UDP-N-acetylglucosamine--N-acetylmuramyl-(pentapeptide) pyrophosphoryl-undecaprenol N-acetylglucosamine transferase.